A 202-amino-acid polypeptide reads, in one-letter code: 3-isopropylmalate dehydratase small subunit (202 aa).

The protein belongs to the LeuD family. LeuD type 1 subfamily. As to quaternary structure, heterodimer of LeuC and LeuD.

The enzyme catalyses (2R,3S)-3-isopropylmalate = (2S)-2-isopropylmalate. It participates in amino-acid biosynthesis; L-leucine biosynthesis; L-leucine from 3-methyl-2-oxobutanoate: step 2/4. Its function is as follows. Catalyzes the isomerization between 2-isopropylmalate and 3-isopropylmalate, via the formation of 2-isopropylmaleate. In Buchnera aphidicola subsp. Pemphigus spyrothecae, this protein is 3-isopropylmalate dehydratase small subunit.